The sequence spans 483 residues: Keratin, type II cytoskeletal 7 (483 aa).

At S2 the chain carries N-acetylserine. Phosphoserine occurs at positions 2, 6, and 7. The interval 2–107 (SVQFSSQTFS…DPQIQQVRKE (106 aa)) is head. The O-linked (GlcNAc) serine glycan is linked to S12. The interval 14–37 (SAAFPRRGGQGRLSSVSSRAGSVS) is disordered. The residue at position 20 (R20) is a Dimethylated arginine; alternate. R20 carries the omega-N-methylarginine; alternate modification. The span at 25 to 37 (RLSSVSSRAGSVS) shows a compositional bias: low complexity. Residues S63 and S88 each carry the phosphoserine modification. Residues 107–143 (EEREQIKTLNNKFASFIDKVRFLEQQNQMLETKWRLL) form a coil 1A region. In terms of domain architecture, IF rod spans 108 to 420 (EREQIKTLNN…KLLEGEESRL (313 aa)). At T114 the chain carries Phosphothreonine. The tract at residues 144–161 (QEQKSSKGSSLPAIFEAH) is linker 1. K147 participates in a covalent cross-link: Glycyl lysine isopeptide (Lys-Gly) (interchain with G-Cter in SUMO2). A coil 1B region spans residues 162 to 253 (IANLRRQLDG…TLYEMELNEL (92 aa)). At K196 the chain carries N6-acetyllysine. Residues 254-277 (QTQISDTSVVLSMDNSRSLDLDSI) are linker 12. S269 and S271 each carry phosphoserine. The interval 278–416 (ISEVKAQYED…ATYRKLLEGE (139 aa)) is coil 2. Residues K282 and K303 each participate in a glycyl lysine isopeptide (Lys-Gly) (interchain with G-Cter in SUMO2) cross-link. Position 306 is a phosphothreonine (T306). Residues K313 and K348 each participate in a glycyl lysine isopeptide (Lys-Gly) (interchain with G-Cter in SUMO2) cross-link. The tract at residues 417–483 (ESRLSGDGVG…TSSSRRSVRN (67 aa)) is tail.

This sequence belongs to the intermediate filament family. Heterotetramer of two type I and two type II keratins. Interacts with eukaryotic translation initiator factor 3 (eIF3) subunit EIF3S10. Interacts with GPER1. Post-translationally, arg-20 is dimethylated, probably to asymmetric dimethylarginine.

Functionally, blocks interferon-dependent interphase and stimulates DNA synthesis in cells. The protein is Keratin, type II cytoskeletal 7 of Potorous tridactylus (Potoroo).